Consider the following 346-residue polypeptide: L-glyceraldehyde 3-phosphate reductase (346 aa).

12 residues coordinate NADP(+): tryptophan 33, aspartate 61, tyrosine 66, serine 168, glutamine 193, threonine 223, leucine 225, glutamine 227, lysine 233, serine 303, glutamine 307, and asparagine 311.

This sequence belongs to the shaker potassium channel beta subunit family.

It carries out the reaction a primary alcohol + NADP(+) = an aldehyde + NADPH + H(+). Functionally, aldo-keto reductase that catalyzes the stereospecific, NADPH-dependent reduction of L-glyceraldehyde 3-phosphate (L-GAP) to L-glycerol 3-phosphate (L-G3P). This is L-glyceraldehyde 3-phosphate reductase from Escherichia coli O157:H7.